The chain runs to 538 residues: Beta-1-syntrophin (538 aa).

Ala-2 carries the N-acetylalanine modification. 2 PH domains span residues 19–298 and 322–433; these read RAQR…SNVN and EIRH…QGCH. Phosphoserine is present on residues Ser-87, Ser-126, and Ser-205. A PDZ domain is found at 112 to 195; that stretch reads GVKVLKQELG…EVLLEVKYMR (84 aa). The interval 205-237 is disordered; the sequence is SPVSEIGWETPPPESPRLGGSTSDPPSSQSFSF. The residue at position 214 (Thr-214) is a Phosphothreonine. Phosphoserine is present on residues Ser-219, Ser-232, Ser-236, and Ser-389. Low complexity predominate over residues 225 to 236; the sequence is STSDPPSSQSFS. An SU domain is found at 482–538; the sequence is PYEKLKMSSDDGIRMLYLDFGGKDGEIQLDLHSCPKPIVFIIHSFLSAKITRLGLVA. Positions 518–538 are calmodulin-binding; that stretch reads PIVFIIHSFLSAKITRLGLVA.

This sequence belongs to the syntrophin family. Monomer and homodimer. Interacts with the other members of the syntrophin family SNTA1 and SNTB2; with the sodium channel proteins SCN4A and SCN5A. Interacts with the viral HTLV-1 TAX protein and with dystrophin protein DMD and related proteins DTNA and UTRN. Interacts with DTNB. In terms of processing, phosphorylated by CaM-kinase II. As to expression, ubiquitous.

The protein localises to the cell membrane. The protein resides in the sarcolemma. It localises to the cell junction. It is found in the cytoplasm. Its subcellular location is the cytoskeleton. Functionally, adapter protein that binds to and probably organizes the subcellular localization of a variety of membrane proteins. May link various receptors to the actin cytoskeleton and the dystrophin glycoprotein complex. In Homo sapiens (Human), this protein is Beta-1-syntrophin (SNTB1).